Reading from the N-terminus, the 512-residue chain is Nephrocan (512 aa).

Positions 1–19 are cleaved as a signal peptide; it reads MHPLWAFLLGLSLTNGLSA. Positions 20-44 constitute an LRRNT domain; that stretch reads NCPGRCSCDSMQSVQCYRLMELPSG. 17 LRR repeats span residues 45 to 69, 71 to 93, 94 to 117, 119 to 138, 139 to 162, 164 to 185, 186 to 208, 210 to 232, 234 to 253, 254 to 276, 277 to 299, 301 to 320, 321 to 344, 346 to 371, 373 to 389, 390 to 413, and 415 to 442; these read IPST…NFTG, LALE…TFKT, LSTL…LPAN, EVLK…EFEG, LKNL…MLSP, ASLQ…PLSL, PHLK…VFTS, QNLQ…LPKS, LSLK…DMKH, LENL…AQQL, TNLT…LPSR, QKLD…EFQD, LRDL…ALQR, SQLS…TLAR, DLKG…ELRD, LKQL…ALEG, and PRLR…VLKA. Residue Asn-66 is glycosylated (N-linked (GlcNAc...) asparagine). Basic and acidic residues predominate over residues 474–484; that stretch reads EHHLQQSEKSK. Positions 474–512 are disordered; the sequence is EHHLQQSEKSKETKKKPKPEDSSSIRLNMDDDDDDYEID. Over residues 503–512 the composition is skewed to acidic residues; it reads DDDDDDYEID.

It belongs to the small leucine-rich proteoglycan (SLRP) family. Post-translationally, N-glycosylated. In terms of tissue distribution, expressed at highest levels in the kidney, where it is primarily detected in the epithelial cells of distal tubules and collecting ducts, and more weakly in proximal epithelial cells. Expressed at lower levels in heart and lung (at protein level). Detected in skeletal muscle.

The protein resides in the secreted. May inhibit TGF-beta signaling. The chain is Nephrocan from Mus musculus (Mouse).